The following is a 185-amino-acid chain: NADH-dependent FMN reductase AsuE2 (185 aa).

The segment covering 1-13 (MSTHTARRAGATA) has biased composition (low complexity). Residues 1–24 (MSTHTARRAGATAGHDRDRGTEPG) form a disordered region. The segment covering 14–24 (GHDRDRGTEPG) has biased composition (basic and acidic residues).

Belongs to the non-flavoprotein flavin reductase family. In terms of assembly, does not interact with AsuE1, suggesting a possible transient interaction between the two enzymes instead of formation of a stable complex.

It carries out the reaction FMNH2 + NAD(+) = FMN + NADH + 2 H(+). It participates in antibiotic biosynthesis. Its function is as follows. Involved in the biosynthesis of the antibiotic asukamycin. When flavin concentration is low, AsuE2 assists the protoasukamycin 4-monooxygenase AsuE1 by providing a reduced form of flavin, enhancing AsuE1 activity. This is NADH-dependent FMN reductase AsuE2 from Streptomyces nodosus subsp. asukaensis.